Reading from the N-terminus, the 1009-residue chain is Glutamate receptor ionotropic, delta-1 (1009 aa).

The N-terminal stretch at 1–20 is a signal peptide; the sequence is MEALTLWLLPWICQCVTVRA. Residues 21-436 form an interaction with CBLN1 region; sequence DSIIHIGAIF…ERPMGSRLQG (416 aa). Topologically, residues 21–562 are extracellular; it reads DSIIHIGAIF…SIFSLFAPFD (542 aa). Cystine bridges form between cysteine 80–cysteine 351, cysteine 96–cysteine 128, and cysteine 294–cysteine 306. N-linked (GlcNAc...) asparagine glycosylation is found at asparagine 131 and asparagine 200. Residues asparagine 422 and asparagine 498 are each glycosylated (N-linked (GlcNAc...) asparagine). Glutamate 527, valine 530, and aspartate 531 together coordinate Ca(2+). The helical transmembrane segment at 563–583 threads the bilayer; the sequence is FAVWACIAAAIPVVGVLIFVL. Over 584–637 the chain is Cytoplasmic; the sequence is NRIQAVRSQSATQPRPSASATLHSAIWIVYGAFVQQGGESSVNSVAMRIVMGSW. The helical transmembrane segment at 638–658 threads the bilayer; it reads WLFTLIVCSSYTANLAAFLTV. Residues 659 to 830 lie on the Extracellular side of the membrane; that stretch reads SRMDNPIRTF…TEGKSLKLHS (172 aa). Ca(2+)-binding residues include aspartate 753, aspartate 755, and serine 757. The helical transmembrane segment at 831–851 threads the bilayer; the sequence is FAGVFCILAIGLLLACLVAAL. The Cytoplasmic segment spans residues 852–1009; it reads ELWWNSNRCH…ALDTSHGTSI (158 aa). A compositionally biased stretch (polar residues) spans 931 to 942; that stretch reads LPEQSSHGTSRT. The segment at 931–960 is disordered; sequence LPEQSSHGTSRTLSSGPSSNLPLPLSSSAT. Positions 943–958 are enriched in low complexity; sequence LSSGPSSNLPLPLSSS.

It belongs to the glutamate-gated ion channel (TC 1.A.10.1) family. GRID1 subfamily. Homodimer. Interacts (via extracellular N-terminal domain) with CBLN1 (via C1q domain), and more weakly with CBLN2; the interactions mediate the trans-synaptic adhesion complexes also with neurexins and are required for ligand-gated cation channel activity. As to expression, equally in forebrain and cerebellum.

It localises to the postsynaptic cell membrane. It catalyses the reaction Ca(2+)(in) = Ca(2+)(out). It carries out the reaction Na(+)(in) = Na(+)(out). Functionally, member of the ionotropic glutamate receptor family, which plays a crucial role in synaptic organization and signal transduction in the central nervous system. Although it shares structural features with ionotropic glutamate receptors, does not bind glutamate as a primary ligand. Instead, forms trans-synaptic adhesion complexes with presynaptic neurexins and cerebellins, regulating NMDA and AMPA receptor activity and influencing synaptic plasticity through signal transduction. In the presence of NRX1B-CBLN1, forms cation-selective channels that are proposed to be gated by glycine and D-serine. However, recent research disputes this ligand-gated cation channel activity. Cation-selective ion channel can be triggered by GRM1 in dopaminergic neurons. Also acts as a receptor for GABA, modulating inhibitory synaptic plasticity through non-ionotropic mechanisms. The polypeptide is Glutamate receptor ionotropic, delta-1 (Grid1) (Mus musculus (Mouse)).